A 190-amino-acid polypeptide reads, in one-letter code: uncharacterized protein (190 aa).

The N-terminal stretch at 1-15 is a signal peptide; it reads MKVFAYIALATVVAG.

Its subcellular location is the secreted. This is an uncharacterized protein from Arthroderma benhamiae (strain ATCC MYA-4681 / CBS 112371) (Trichophyton mentagrophytes).